Consider the following 185-residue polypeptide: Probable gluconokinase (185 aa).

Residue 11 to 18 participates in ATP binding; that stretch reads GVSGSGKS.

It belongs to the gluconokinase GntK/GntV family.

It carries out the reaction D-gluconate + ATP = 6-phospho-D-gluconate + ADP + H(+). Its pathway is carbohydrate acid metabolism; D-gluconate degradation. This chain is Probable gluconokinase (Idnk), found in Rattus norvegicus (Rat).